Consider the following 380-residue polypeptide: Adaptive-response sensory kinase SasA (380 aa).

Positions L20–W101 are kaiB-like domain, interacts with KaiC. A Histidine kinase domain is found at L157–S380. The residue at position 160 (H160) is a Phosphohistidine; by autocatalysis.

As to quaternary structure, homotrimer with a small amount of possible homohexamer; a protein fragment of 109-380 is also a homotrimer. Interacts with KaiC, probably as 1 SasA trimer:1 KaiC homohexamer; unphosphorylated SasA has the highest affinity. Homodimer. Binds to the B-loop in the CI domain of KaiC; SasA and KaiB(fs) compete to bind to the CI domain. Binds preferentially to doubly phosphorylated KaiC. Post-translationally, autophosphorylates, probably on His-160.

It carries out the reaction ATP + protein L-histidine = ADP + protein N-phospho-L-histidine.. Functionally, member of the two-component regulatory system SasA/RpaA involved in genome-wide circadian gene expression. One of several clock output pathways. Participates in the Kai clock protein complex, the main circadian regulator in cyanobacteria, via its interaction with KaiC. KaiC enhances the autophosphorylation activity of SasA, which then transfers its phosphate group to RpaA to activate it. In addition to its output function, recruits fold-shifted KaiB (KaiB(fs)) to KaiC to cooperatively form the KaiB(6):KaiC(6) complex (independent of SasA kinase activity). Required for robustness of the circadian rhythm of gene expression and is involved in clock output, also required for adaptation to light/dark cycles. This Thermosynechococcus vestitus (strain NIES-2133 / IAM M-273 / BP-1) protein is Adaptive-response sensory kinase SasA.